A 274-amino-acid polypeptide reads, in one-letter code: Large ribosomal subunit protein uL2cz/uL2cy (274 aa).

The tract at residues 224–274 (NPVDHPHGGGEGRAPIGRKKPATPWGYPALGRRSRKRNKYSDNLILRRRSK) is disordered.

This sequence belongs to the universal ribosomal protein uL2 family. In terms of assembly, part of the 50S ribosomal subunit.

The protein resides in the plastid. Its subcellular location is the chloroplast. In Morus indica (Mulberry), this protein is Large ribosomal subunit protein uL2cz/uL2cy (rpl2-A).